Consider the following 595-residue polypeptide: Beta-(1--&gt;2)glucan export ATP-binding/permease protein NdvA (595 aa).

Transmembrane regions (helical) follow at residues 21 to 41 (FLLICTANITLAIITIAEPIL), 56 to 76 (LVTLAVWMCFGISNIIAYVLV), 129 to 149 (IWLEFMRQHLSTFVALFVLVP), 158 to 178 (LSIVLMVLAILYILIARLVMQ), and 252 to 272 (ISIVCVLLLGAFFVIKGQLSV). The 281-residue stretch at 21-301 (FLLICTANIT…ISGFINLAVS (281 aa)) folds into the ABC transmembrane type-1 domain. Residues 335–569 (IQFHHVTYEF…DGHFYKLLKR (235 aa)) enclose the ABC transporter domain. 368–375 (GPTGAGKT) is an ATP binding site.

This sequence belongs to the ABC transporter superfamily. Beta-(1--&gt;2)glucan exporter (TC 3.A.1.108.1) family. Homodimer.

It is found in the cell inner membrane. The catalysed reaction is [(1-&gt;2)-beta-D-glucosyl](n)(in) + ATP + H2O = [(1-&gt;2)-beta-D-glucosyl](n)(out) + ADP + phosphate + H(+). In terms of biological role, involved in beta-(1--&gt;2)glucan export. Transmembrane domains (TMD) form a pore in the inner membrane and the ATP-binding domain (NBD) is responsible for energy generation. The polypeptide is Beta-(1--&gt;2)glucan export ATP-binding/permease protein NdvA (Bartonella bacilliformis).